Here is a 373-residue protein sequence, read N- to C-terminus: tRNA (guanine(26)-N(2))-dimethyltransferase (373 aa).

The region spanning 2–365 (KIISEGETKL…AELSDLVVLI (364 aa)) is the Trm1 methyltransferase domain. Arg35, Arg66, Asp86, Asp113, and Ala114 together coordinate S-adenosyl-L-methionine.

This sequence belongs to the class I-like SAM-binding methyltransferase superfamily. Trm1 family.

It carries out the reaction guanosine(26) in tRNA + 2 S-adenosyl-L-methionine = N(2)-dimethylguanosine(26) in tRNA + 2 S-adenosyl-L-homocysteine + 2 H(+). Dimethylates a single guanine residue at position 26 of a number of tRNAs using S-adenosyl-L-methionine as donor of the methyl groups. The protein is tRNA (guanine(26)-N(2))-dimethyltransferase of Methanococcus maripaludis (strain C6 / ATCC BAA-1332).